The primary structure comprises 407 residues: Phosphopentomutase (407 aa).

6 residues coordinate Mn(2+): Asp-10, Asp-306, His-311, Asp-347, His-348, and His-359.

This sequence belongs to the phosphopentomutase family. Mn(2+) serves as cofactor.

The protein resides in the cytoplasm. It carries out the reaction 2-deoxy-alpha-D-ribose 1-phosphate = 2-deoxy-D-ribose 5-phosphate. The enzyme catalyses alpha-D-ribose 1-phosphate = D-ribose 5-phosphate. Its pathway is carbohydrate degradation; 2-deoxy-D-ribose 1-phosphate degradation; D-glyceraldehyde 3-phosphate and acetaldehyde from 2-deoxy-alpha-D-ribose 1-phosphate: step 1/2. In terms of biological role, isomerase that catalyzes the conversion of deoxy-ribose 1-phosphate (dRib-1-P) and ribose 1-phosphate (Rib-1-P) to deoxy-ribose 5-phosphate (dRib-5-P) and ribose 5-phosphate (Rib-5-P), respectively. The polypeptide is Phosphopentomutase (Escherichia coli O127:H6 (strain E2348/69 / EPEC)).